Consider the following 370-residue polypeptide: 3-dehydroquinate synthase (370 aa).

Residues 107 to 111 (GVIGD), 131 to 132 (TS), K144, and K153 contribute to the NAD(+) site. Zn(2+) contacts are provided by E186, H249, and H267.

The protein belongs to the sugar phosphate cyclases superfamily. Dehydroquinate synthase family. The cofactor is Co(2+). Requires Zn(2+) as cofactor. NAD(+) is required as a cofactor.

Its subcellular location is the cytoplasm. The catalysed reaction is 7-phospho-2-dehydro-3-deoxy-D-arabino-heptonate = 3-dehydroquinate + phosphate. Its pathway is metabolic intermediate biosynthesis; chorismate biosynthesis; chorismate from D-erythrose 4-phosphate and phosphoenolpyruvate: step 2/7. Catalyzes the conversion of 3-deoxy-D-arabino-heptulosonate 7-phosphate (DAHP) to dehydroquinate (DHQ). This chain is 3-dehydroquinate synthase, found in Roseobacter denitrificans (strain ATCC 33942 / OCh 114) (Erythrobacter sp. (strain OCh 114)).